The following is a 116-amino-acid chain: NADH-ubiquinone oxidoreductase chain 3 (116 aa).

3 consecutive transmembrane segments (helical) span residues 4–24 (LIITLIINTALSTIIVLIAFW), 56–76 (FFLIAITFLLFDLEIALLLPL), and 88–108 (TLILAYCLIILLTAGLAYEWI).

Belongs to the complex I subunit 3 family. In terms of assembly, core subunit of respiratory chain NADH dehydrogenase (Complex I) which is composed of 45 different subunits. Interacts with TMEM186. Interacts with TMEM242.

Its subcellular location is the mitochondrion inner membrane. It carries out the reaction a ubiquinone + NADH + 5 H(+)(in) = a ubiquinol + NAD(+) + 4 H(+)(out). Its function is as follows. Core subunit of the mitochondrial membrane respiratory chain NADH dehydrogenase (Complex I) which catalyzes electron transfer from NADH through the respiratory chain, using ubiquinone as an electron acceptor. Essential for the catalytic activity of complex I. This Osphranter robustus (Wallaroo) protein is NADH-ubiquinone oxidoreductase chain 3.